We begin with the raw amino-acid sequence, 441 residues long: Zinc finger protein ZIC 3 (441 aa).

A C2H2-type 1; atypical zinc finger spans residues 222-257 (LSCKWLEESTMNHPQKTCDRTFSSMHELVTHMTMEH). The segment at 266–293 (HICYWEECPRGGKSFKAKYKLVNHIRVH) adopts a C2H2-type 2; atypical zinc-finger fold. C2H2-type zinc fingers lie at residues 299-323 (FPCPFPGCGKIFARSENLKIHKRTH), 329-353 (FKCEFEGCDRRFANSSDRKKHMHVH), and 359-381 (YICKVCDKSYTHPSSLRKHMKVH). The segment at 375-441 (RKHMKVHESQ…LPPNFNEWYV (67 aa)) is disordered. Over residues 383-399 (SQGSDSSPAASSGYESA) the composition is skewed to low complexity. Polar residues predominate over residues 406–429 (SANSEEPSKNSSATHQTNNNSHNT).

It belongs to the GLI C2H2-type zinc-finger protein family. In terms of tissue distribution, first detected at early gastrula (stage 10.25) in the dorsal lip and prospective neural plate. Also expressed in the mesoderm at early gastrulation, with expression strongest on the dorsal side. Mesodermal expression continues at stage 12 but is hardly detectable after stage 14. As gastrulation proceeds, expression decreases in the dorsal lip and increases in the prospective neural plate. At the neural plate stage (stage 14), expressed strongly in the prospective mesencephalon and anterior rhombencephalon, after which expression becomes stronger in the anterior neural folds. At early tailbud stage (stage 20), expression becomes restricted to the dorsal region of forebrain, midbrain and hindbrain, and weakly to the dorsal trunk. After mid-tailbud stage, expression decreases in the diencephalon, appears in the lateral mesoderm of the tailbud region and becomes restricted in the dorsal part of the neural tube.

Its subcellular location is the nucleus. The protein resides in the cytoplasm. Functionally, probably acts as a transcriptional activator. May bind to the minimal GLI-consensus sequence 5'-GGGTGGTC-3'. Can determine the ectodermal cell fate and promote the earliest step of neural and neural crest development. Involved in establishing left-right asymmetry in the embryo. The protein is Zinc finger protein ZIC 3 (zic3) of Xenopus laevis (African clawed frog).